Here is a 908-residue protein sequence, read N- to C-terminus: MKNIYKDTLLIGQTDFDMRAGLKDKEPVIQEMWDAKKIYDQKQKLNEGKPLFMLHDGPPYANGDLHIGHALNKTLKDMIIRWKNANGYLAPFIMGWDTHGLPIETAVTKMGIDRKQTPAVEFRDMCKDYALKQVANQANQFKRLGIFSNSDVKYVTLTHDFEVSELRLFQKMYEKEMVYKALKPIYWSPSSESALAESEIEYKDVKSPTIFVAMKVVEGNAKIDTDTEIVIWTTTPWTIPSNQMAAVGENIEYNIVKANDRKFILASSLVNKVAEQIGWETFEILDTLKGPEIVGVKYAHPLYEQKINPVVIGHHVTDEAGTGIVHTAGGFGEDDYIIVKQHGIEPFAPIDDQGKFTNEIAEFDEKLVGVFYEDANKIVGMDLEAKQRLLKLKFVSHSYPHDWRTKKPVIYRCTSQWFIGLDKAKNQILANVDQITTKPEWAKKRLYQVLEDRTDWTISRQRLWGVPIVAFYDQNDKLVLNNEILAFAIDKIAELGTNAWFDKPADTFLPEAYRNKNLKKEKDILDVWFDSGSSAIALSERFKNLPLPYDLYLEGNDQYRGWFNASMINSTIYSGKSPYKKLISHGMTVDEKGNKMSKSLGNGIDPIEFANTQGADILRLWVASTDYTDDQKIGPEIIKQIGESYRKIRNTMRFILANLFDFDPSKDYQTNLTEVDRYALNNLSVVKNKASEAYDNLSYNQVYNLVVNYVTKDLSSFYLDFIKDILYIEKNDSIRRRQVQTVLYEQLWMLIDLLRPILIHTIEEVYQAMVNLNKTDSVHLLDNKKQDFIESNEFVTKWNNIMVLRDDVNKALEIAREQKIINKGFEATVKVCLKDEFKNIESTTELEKIFIVNSLSFTNDCSGLSEQKIAFVGVELKNGTKCERCWGIFDTLINNEICERCNSVVESL.

Positions 59–69 (PYANGDLHIGH) match the 'HIGH' region motif. Glu554 is an L-isoleucyl-5'-AMP binding site. Residues 595 to 599 (KMSKS) carry the 'KMSKS' region motif. ATP is bound at residue Lys598. Zn(2+) is bound by residues Cys882, Cys885, Cys898, and Cys901.

This sequence belongs to the class-I aminoacyl-tRNA synthetase family. IleS type 1 subfamily. As to quaternary structure, monomer. Zn(2+) serves as cofactor.

It is found in the cytoplasm. It carries out the reaction tRNA(Ile) + L-isoleucine + ATP = L-isoleucyl-tRNA(Ile) + AMP + diphosphate. Catalyzes the attachment of isoleucine to tRNA(Ile). As IleRS can inadvertently accommodate and process structurally similar amino acids such as valine, to avoid such errors it has two additional distinct tRNA(Ile)-dependent editing activities. One activity is designated as 'pretransfer' editing and involves the hydrolysis of activated Val-AMP. The other activity is designated 'posttransfer' editing and involves deacylation of mischarged Val-tRNA(Ile). In Mesoplasma florum (strain ATCC 33453 / NBRC 100688 / NCTC 11704 / L1) (Acholeplasma florum), this protein is Isoleucine--tRNA ligase.